A 163-amino-acid polypeptide reads, in one-letter code: NADH-quinone oxidoreductase subunit I (163 aa).

4Fe-4S ferredoxin-type domains lie at 54–84 (LRRY…IDSH) and 94–123 (TRYD…LTRL). 8 residues coordinate [4Fe-4S] cluster: Cys-64, Cys-67, Cys-70, Cys-74, Cys-103, Cys-106, Cys-109, and Cys-113.

It belongs to the complex I 23 kDa subunit family. As to quaternary structure, NDH-1 is composed of 14 different subunits. Subunits NuoA, H, J, K, L, M, N constitute the membrane sector of the complex. It depends on [4Fe-4S] cluster as a cofactor.

It localises to the cell inner membrane. It carries out the reaction a quinone + NADH + 5 H(+)(in) = a quinol + NAD(+) + 4 H(+)(out). In terms of biological role, NDH-1 shuttles electrons from NADH, via FMN and iron-sulfur (Fe-S) centers, to quinones in the respiratory chain. The immediate electron acceptor for the enzyme in this species is believed to be ubiquinone. Couples the redox reaction to proton translocation (for every two electrons transferred, four hydrogen ions are translocated across the cytoplasmic membrane), and thus conserves the redox energy in a proton gradient. This chain is NADH-quinone oxidoreductase subunit I, found in Halorhodospira halophila (strain DSM 244 / SL1) (Ectothiorhodospira halophila (strain DSM 244 / SL1)).